Consider the following 389-residue polypeptide: Chalcone synthase 8 (389 aa).

Residue Cys-164 is part of the active site.

Belongs to the thiolase-like superfamily. Chalcone/stilbene synthases family.

The enzyme catalyses (E)-4-coumaroyl-CoA + 3 malonyl-CoA + 3 H(+) = 2',4,4',6'-tetrahydroxychalcone + 3 CO2 + 4 CoA. The protein operates within secondary metabolite biosynthesis; flavonoid biosynthesis. Functionally, the primary product of this enzyme is 4,2',4',6'-tetrahydroxychalcone (also termed naringenin-chalcone or chalcone) which can under specific conditions spontaneously isomerize into naringenin. The protein is Chalcone synthase 8 (CHS8) of Medicago sativa (Alfalfa).